The primary structure comprises 704 residues: Neutral ceramidase (704 aa).

Positions 1–23 are cleaved as a signal peptide; that stretch reads MAISKIAFLALIALSGLCGLASA. The N-linked (GlcNAc...) asparagine glycan is linked to Asn230. The active-site Nucleophile is Ser276. N-linked (GlcNAc...) asparagine glycans are attached at residues Asn362, Asn550, and Asn598.

This sequence belongs to the neutral ceramidase family. In terms of processing, N-glycosylated.

It is found in the secreted. It carries out the reaction an N-acylsphing-4-enine + H2O = sphing-4-enine + a fatty acid. Its function is as follows. Hydrolyzes the sphingolipid ceramide into sphingosine and free fatty acid at an optimal pH of 6.5-7.5. Acts as a key regulator of sphingolipid signaling metabolites by generating sphingosine at the cell surface. The chain is Neutral ceramidase (CDase) from Drosophila pseudoobscura pseudoobscura (Fruit fly).